The following is a 376-amino-acid chain: N-acetyldiaminopimelate deacetylase (376 aa).

D69 is a catalytic residue. The Proton acceptor role is filled by E127.

The protein belongs to the peptidase M20A family. N-acetyldiaminopimelate deacetylase subfamily.

It carries out the reaction N-acetyl-(2S,6S)-2,6-diaminopimelate + H2O = (2S,6S)-2,6-diaminopimelate + acetate. It participates in amino-acid biosynthesis; L-lysine biosynthesis via DAP pathway; LL-2,6-diaminopimelate from (S)-tetrahydrodipicolinate (acetylase route): step 3/3. In terms of biological role, catalyzes the conversion of N-acetyl-diaminopimelate to diaminopimelate and acetate. The chain is N-acetyldiaminopimelate deacetylase from Lactococcus lactis subsp. cremoris (strain SK11).